A 121-amino-acid polypeptide reads, in one-letter code: Small ribosomal subunit protein bS6 (121 aa).

Residues 99–121 (PLPAPRVAPGTEAPAEPEAAAPA) form a disordered region. A compositionally biased stretch (low complexity) spans 110-121 (EAPAEPEAAAPA).

The protein belongs to the bacterial ribosomal protein bS6 family.

Binds together with bS18 to 16S ribosomal RNA. The sequence is that of Small ribosomal subunit protein bS6 from Synechococcus sp. (strain CC9311).